We begin with the raw amino-acid sequence, 465 residues long: Glutamate--tRNA ligase 2 (465 aa).

The short motif at 8 to 18 (PSPTGLMHLGN) is the 'HIGH' region element. A 'KMSKS' region motif is present at residues 249–253 (PLSKR). Lysine 252 lines the ATP pocket.

It belongs to the class-I aminoacyl-tRNA synthetase family. Glutamate--tRNA ligase type 1 subfamily. Monomer.

It localises to the cytoplasm. The enzyme catalyses tRNA(Glu) + L-glutamate + ATP = L-glutamyl-tRNA(Glu) + AMP + diphosphate. In terms of biological role, catalyzes the attachment of glutamate to tRNA(Glu) in a two-step reaction: glutamate is first activated by ATP to form Glu-AMP and then transferred to the acceptor end of tRNA(Glu). The sequence is that of Glutamate--tRNA ligase 2 from Coxiella burnetii (strain RSA 331 / Henzerling II).